The chain runs to 360 residues: S-adenosylmethionine:tRNA ribosyltransferase-isomerase (360 aa).

Belongs to the QueA family. As to quaternary structure, monomer.

It is found in the cytoplasm. The enzyme catalyses 7-aminomethyl-7-carbaguanosine(34) in tRNA + S-adenosyl-L-methionine = epoxyqueuosine(34) in tRNA + adenine + L-methionine + 2 H(+). Its pathway is tRNA modification; tRNA-queuosine biosynthesis. Transfers and isomerizes the ribose moiety from AdoMet to the 7-aminomethyl group of 7-deazaguanine (preQ1-tRNA) to give epoxyqueuosine (oQ-tRNA). The polypeptide is S-adenosylmethionine:tRNA ribosyltransferase-isomerase (Burkholderia pseudomallei (strain K96243)).